A 711-amino-acid polypeptide reads, in one-letter code: Tyrosine-protein phosphatase 2 (711 aa).

Residues 21 to 130 enclose the Rhodanese domain; the sequence is TESVSWIIDL…FASSHPDAIV (110 aa). Disordered regions lie at residues 275–306 and 329–376; these read APQQ…SRVR and IIPR…RANK. 2 stretches are compositionally biased toward polar residues: residues 290 to 306 and 340 to 363; these read SYPS…SRVR and NAQN…SNTR. In terms of domain architecture, Tyrosine-protein phosphatase spans 433-698; sequence EMTRSLAFND…KFLYDVVDYL (266 aa). Cys-630 acts as the Phosphocysteine intermediate in catalysis.

Belongs to the protein-tyrosine phosphatase family. Non-receptor class subfamily.

The protein localises to the cytoplasm. It catalyses the reaction O-phospho-L-tyrosyl-[protein] + H2O = L-tyrosyl-[protein] + phosphate. Functionally, plays a role in inhibiting the onset of mitosis. Dephosphorylates sty1/spc1 and wis1/spc2/sty2. The polypeptide is Tyrosine-protein phosphatase 2 (pyp2) (Schizosaccharomyces pombe (strain 972 / ATCC 24843) (Fission yeast)).